Here is a 341-residue protein sequence, read N- to C-terminus: ATP synthase subunit a 2 (341 aa).

An N-terminal signal peptide occupies residues 1–33 (MKRVKVIQIKGFFRVMALLAPLLLNAYLPVQAS). 6 helical membrane passes run 112 to 132 (VVML…VGAA), 173 to 193 (LPYL…GLIP), 195 to 215 (GATA…TFFI), 242 to 262 (WIIM…ALTV), 273 to 293 (IVIL…VAAA), and 307 to 327 (IFVA…FIGL).

Belongs to the ATPase A chain family. F-type ATPases have 2 components, CF(1) - the catalytic core - and CF(0) - the membrane proton channel. CF(1) has five subunits: alpha(3), beta(3), gamma(1), delta(1), epsilon(1). CF(0) has four main subunits: a, b, b' and c.

Its subcellular location is the cell inner membrane. Functionally, key component of the proton channel; it plays a direct role in the translocation of protons across the membrane. The protein is ATP synthase subunit a 2 of Chlorobium luteolum (strain DSM 273 / BCRC 81028 / 2530) (Pelodictyon luteolum).